The following is a 205-amino-acid chain: Small ribosomal subunit protein uS5 (205 aa).

Positions 1–25 (MSGAQRGQRGGERRGGRDDRRGQGA) are disordered. Residues 9 to 24 (RGGERRGGRDDRRGQG) show a composition bias toward basic and acidic residues. The S5 DRBM domain occupies 30–93 (YIERVVAINR…EEAKKHFFRV (64 aa)).

Belongs to the universal ribosomal protein uS5 family. In terms of assembly, part of the 30S ribosomal subunit. Contacts proteins S4 and S8.

In terms of biological role, with S4 and S12 plays an important role in translational accuracy. Its function is as follows. Located at the back of the 30S subunit body where it stabilizes the conformation of the head with respect to the body. This chain is Small ribosomal subunit protein uS5, found in Nocardioides sp. (strain ATCC BAA-499 / JS614).